Consider the following 359-residue polypeptide: Beta-hexosaminidase (359 aa).

Residues aspartate 64, arginine 72, arginine 138, and 168–169 (KH) each bind substrate. Histidine 181 (proton donor/acceptor) is an active-site residue. Aspartate 252 acts as the Nucleophile in catalysis.

It belongs to the glycosyl hydrolase 3 family. NagZ subfamily.

Its subcellular location is the cytoplasm. The enzyme catalyses Hydrolysis of terminal non-reducing N-acetyl-D-hexosamine residues in N-acetyl-beta-D-hexosaminides.. Its pathway is cell wall biogenesis; peptidoglycan recycling. Functionally, plays a role in peptidoglycan recycling by cleaving the terminal beta-1,4-linked N-acetylglucosamine (GlcNAc) from peptide-linked peptidoglycan fragments, giving rise to free GlcNAc, anhydro-N-acetylmuramic acid and anhydro-N-acetylmuramic acid-linked peptides. The sequence is that of Beta-hexosaminidase from Thiobacillus denitrificans (strain ATCC 25259 / T1).